A 1143-amino-acid chain; its full sequence is DNA-directed RNA polymerase subunit beta (1143 aa).

Belongs to the RNA polymerase beta chain family. In plastids the minimal PEP RNA polymerase catalytic core is composed of four subunits: alpha, beta, beta', and beta''. When a (nuclear-encoded) sigma factor is associated with the core the holoenzyme is formed, which can initiate transcription.

The protein resides in the plastid. The protein localises to the chloroplast. The catalysed reaction is RNA(n) + a ribonucleoside 5'-triphosphate = RNA(n+1) + diphosphate. DNA-dependent RNA polymerase catalyzes the transcription of DNA into RNA using the four ribonucleoside triphosphates as substrates. The protein is DNA-directed RNA polymerase subunit beta of Pyropia yezoensis (Susabi-nori).